A 426-amino-acid chain; its full sequence is 3-phosphoshikimate 1-carboxyvinyltransferase (426 aa).

The 3-phosphoshikimate site is built by Lys20, Ser21, and Arg25. Phosphoenolpyruvate is bound at residue Lys20. Residues Gly92 and Arg120 each contribute to the phosphoenolpyruvate site. Ser166, Gln168, Asp312, and Lys339 together coordinate 3-phosphoshikimate. Gln168 contacts phosphoenolpyruvate. Asp312 acts as the Proton acceptor in catalysis. Arg385 contacts phosphoenolpyruvate.

The protein belongs to the EPSP synthase family. Monomer.

It is found in the cytoplasm. It catalyses the reaction 3-phosphoshikimate + phosphoenolpyruvate = 5-O-(1-carboxyvinyl)-3-phosphoshikimate + phosphate. It participates in metabolic intermediate biosynthesis; chorismate biosynthesis; chorismate from D-erythrose 4-phosphate and phosphoenolpyruvate: step 6/7. Catalyzes the transfer of the enolpyruvyl moiety of phosphoenolpyruvate (PEP) to the 5-hydroxyl of shikimate-3-phosphate (S3P) to produce enolpyruvyl shikimate-3-phosphate and inorganic phosphate. In Streptococcus suis (strain 98HAH33), this protein is 3-phosphoshikimate 1-carboxyvinyltransferase.